Reading from the N-terminus, the 291-residue chain is Tumor necrosis factor ligand superfamily member 10 (291 aa).

Over 1–17 the chain is Cytoplasmic; the sequence is MPSSGALKDLSFSQHFR. The chain crosses the membrane as a helical; Signal-anchor for type II membrane protein span at residues 18 to 38; sequence MMVICIVLLQVLLQAVSVAVT. Residues 39 to 291 lie on the Extracellular side of the membrane; it reads YMYFTNEMKQ…ASFFGAFLIN (253 aa). Asn-52 carries N-linked (GlcNAc...) asparagine glycosylation. A THD domain is found at 126-290; the sequence is VAAHITGITR…EASFFGAFLI (165 aa). A Zn(2+)-binding site is contributed by Cys-240.

This sequence belongs to the tumor necrosis factor family. In terms of assembly, homotrimer. One TNFSF10 homotrimer interacts with three TNFSF10A mononers. One TNFSF10 homotrimer interacts with three TNFSF10B mononers. In terms of processing, tyrosine phosphorylated by PKDCC/VLK. Widespread.

It is found in the cell membrane. The protein localises to the secreted. Cytokine that binds to TNFRSF10A/TRAILR1, TNFRSF10B/TRAILR2, TNFRSF10C/TRAILR3, TNFRSF10D/TRAILR4 and possibly also to TNFRSF11B/OPG. Induces apoptosis. Its activity may be modulated by binding to the decoy receptors TNFRSF10C/TRAILR3, TNFRSF10D/TRAILR4 and TNFRSF11B/OPG that cannot induce apoptosis. This chain is Tumor necrosis factor ligand superfamily member 10 (Tnfsf10), found in Mus musculus (Mouse).